A 240-amino-acid polypeptide reads, in one-letter code: Uridylate kinase (240 aa).

13 to 16 (KLSG) is an ATP binding site. Residues 21–26 (GEKGFG) are involved in allosteric activation by GTP. Glycine 55 contributes to the UMP binding site. Residues glycine 56 and arginine 60 each contribute to the ATP site. Residues aspartate 75 and 136–143 (IGNPYFST) each bind UMP. ATP contacts are provided by asparagine 164, tyrosine 170, and aspartate 173.

Belongs to the UMP kinase family. In terms of assembly, homohexamer.

It is found in the cytoplasm. The enzyme catalyses UMP + ATP = UDP + ADP. It participates in pyrimidine metabolism; CTP biosynthesis via de novo pathway; UDP from UMP (UMPK route): step 1/1. Its activity is regulated as follows. Allosterically activated by GTP. Inhibited by UTP. Functionally, catalyzes the reversible phosphorylation of UMP to UDP. The protein is Uridylate kinase of Staphylococcus aureus (strain USA300).